A 205-amino-acid chain; its full sequence is Urease accessory protein UreG (205 aa).

Residue 12 to 19 (GPVGSGKT) coordinates GTP.

This sequence belongs to the SIMIBI class G3E GTPase family. UreG subfamily. As to quaternary structure, homodimer. UreD, UreF and UreG form a complex that acts as a GTP-hydrolysis-dependent molecular chaperone, activating the urease apoprotein by helping to assemble the nickel containing metallocenter of UreC. The UreE protein probably delivers the nickel.

It localises to the cytoplasm. Functionally, facilitates the functional incorporation of the urease nickel metallocenter. This process requires GTP hydrolysis, probably effectuated by UreG. The sequence is that of Urease accessory protein UreG from Pseudomonas savastanoi pv. phaseolicola (strain 1448A / Race 6) (Pseudomonas syringae pv. phaseolicola (strain 1448A / Race 6)).